The primary structure comprises 680 residues: Methionine--tRNA ligase (680 aa).

Positions 15 to 25 (PYANGPVHIGH) match the 'HIGH' region motif. C147, C150, C160, and C163 together coordinate Zn(2+). The 'KMSKS' region motif lies at 332 to 336 (KISTS). Residue T335 participates in ATP binding. The tRNA-binding domain maps to 578 to 680 (EFEKLDIRVG…REVKPGSEVK (103 aa)).

The protein belongs to the class-I aminoacyl-tRNA synthetase family. MetG type 1 subfamily. As to quaternary structure, homodimer. Zn(2+) is required as a cofactor.

It is found in the cytoplasm. It catalyses the reaction tRNA(Met) + L-methionine + ATP = L-methionyl-tRNA(Met) + AMP + diphosphate. Is required not only for elongation of protein synthesis but also for the initiation of all mRNA translation through initiator tRNA(fMet) aminoacylation. The protein is Methionine--tRNA ligase of Phocaeicola vulgatus (strain ATCC 8482 / DSM 1447 / JCM 5826 / CCUG 4940 / NBRC 14291 / NCTC 11154) (Bacteroides vulgatus).